We begin with the raw amino-acid sequence, 115 residues long: Large ribosomal subunit protein uL24 (115 aa).

It belongs to the universal ribosomal protein uL24 family. As to quaternary structure, part of the 50S ribosomal subunit.

Functionally, one of two assembly initiator proteins, it binds directly to the 5'-end of the 23S rRNA, where it nucleates assembly of the 50S subunit. One of the proteins that surrounds the polypeptide exit tunnel on the outside of the subunit. This Acaryochloris marina (strain MBIC 11017) protein is Large ribosomal subunit protein uL24.